We begin with the raw amino-acid sequence, 260 residues long: Global transcriptional regulator CodY (260 aa).

The interval 1-159 (MPNLLEKTRK…SSTVVGIQLL (159 aa)) is GAF domain. Residues 207 to 226 (ASVIADRIGITRSVIVNALR) constitute a DNA-binding region (H-T-H motif).

This sequence belongs to the CodY family.

The protein resides in the cytoplasm. Functionally, DNA-binding global transcriptional regulator which is involved in the adaptive response to starvation and acts by directly or indirectly controlling the expression of numerous genes in response to nutrient availability. During rapid exponential growth, CodY is highly active and represses genes whose products allow adaptation to nutrient depletion. The chain is Global transcriptional regulator CodY from Streptococcus equi subsp. equi (strain 4047).